Consider the following 372-residue polypeptide: tRNA pseudouridine synthase D (372 aa).

D85 acts as the Nucleophile in catalysis. The TRUD domain maps to 160–330 (GFANYFGYQR…MQGSRRFMWG (171 aa)).

Belongs to the pseudouridine synthase TruD family.

It carries out the reaction uridine(13) in tRNA = pseudouridine(13) in tRNA. Responsible for synthesis of pseudouridine from uracil-13 in transfer RNAs. In Campylobacter jejuni subsp. jejuni serotype O:2 (strain ATCC 700819 / NCTC 11168), this protein is tRNA pseudouridine synthase D.